The sequence spans 184 residues: Probable RNA 2'-phosphotransferase (184 aa).

It belongs to the KptA/TPT1 family.

Functionally, removes the 2'-phosphate from RNA via an intermediate in which the phosphate is ADP-ribosylated by NAD followed by a presumed transesterification to release the RNA and generate ADP-ribose 1''-2''-cyclic phosphate (APPR&gt;P). May function as an ADP-ribosylase. This is Probable RNA 2'-phosphotransferase from Escherichia coli (strain 55989 / EAEC).